We begin with the raw amino-acid sequence, 261 residues long: LIM and SH3 domain protein 1 (261 aa).

M1 bears the N-acetylmethionine mark. The LIM zinc-binding domain occupies 5–56 (CARCGKIVYPTEKVNCLDKFWHKACFHCETCKMTLNMKNYKGYEKKPYCNAH). N6-acetyllysine is present on K42. 2 Nebulin repeats span residues 61-95 (SFTMVADTPENLRLKQQSELQSQVRYKEEFEKNKG) and 97-131 (GFSVVADTPELQRIKKTQDQISNIKYHEEFEKSRM). At T68 the chain carries Phosphothreonine. K75 is modified (N6-methyllysine). Residue S99 is modified to Phosphoserine. The residue at position 104 (T104) is a Phosphothreonine. Positions 111–186 (KKTQDQISNI…QPVAQSYGGY (76 aa)) are disordered. K112 is subject to N6-succinyllysine. S118 carries the phosphoserine modification. Positions 121–130 (KYHEEFEKSR) are enriched in basic and acidic residues. A phosphoserine mark is found at S134 and S146. Over residues 167-183 (SAPVYQQPQQQPVAQSY) the composition is skewed to low complexity. One can recognise an SH3 domain in the interval 202 to 261 (GGGKRYRAVYDYSAADEDEVSFQDGDTIVNVQQIDDGWMYGTVERTGDTGMLPANYVEAI).

As to quaternary structure, interacts with F-actin. Interacts with ANKRD54. Interacts with KBTBD10.

It is found in the cytoplasm. Its subcellular location is the cell cortex. The protein resides in the cytoskeleton. Its function is as follows. Plays an important role in the regulation of dynamic actin-based, cytoskeletal activities. Agonist-dependent changes in LASP1 phosphorylation may also serve to regulate actin-associated ion transport activities, not only in the parietal cell but also in certain other F-actin-rich secretory epithelial cell types. The polypeptide is LIM and SH3 domain protein 1 (LASP1) (Homo sapiens (Human)).